Consider the following 186-residue polypeptide: MTLLVGLGNPTLRYAHTRHNVGFDILDSLVSGLNLSFTFSPKHNAHLCIYKDFILLKPQTYMNLSGESVLSTKNFYKPKELLIVHDDLDLPLGVVKFKNGGGNGGHNGLKSIDALCSNAYYRLRVGISKGTNATEHVLSKFNENEEPLKNAVFEHAKNALKFFIECNDFNAMCNHFTLKKPLAIET.

Residue Tyr-14 coordinates tRNA. Residue His-19 is the Proton acceptor of the active site. TRNA contacts are provided by Tyr-61, Asn-63, and Asn-107.

This sequence belongs to the PTH family. In terms of assembly, monomer.

The protein resides in the cytoplasm. The enzyme catalyses an N-acyl-L-alpha-aminoacyl-tRNA + H2O = an N-acyl-L-amino acid + a tRNA + H(+). Its function is as follows. Hydrolyzes ribosome-free peptidyl-tRNAs (with 1 or more amino acids incorporated), which drop off the ribosome during protein synthesis, or as a result of ribosome stalling. Catalyzes the release of premature peptidyl moieties from peptidyl-tRNA molecules trapped in stalled 50S ribosomal subunits, and thus maintains levels of free tRNAs and 50S ribosomes. The protein is Peptidyl-tRNA hydrolase of Helicobacter acinonychis (strain Sheeba).